The sequence spans 282 residues: Phosphoglucan phosphatase LSF2, chloroplastic (282 aa).

A chloroplast-targeting transit peptide spans 1 to 61 (MSVIGSKSCI…GENPGTNGVS (61 aa)). Substrate contacts are provided by residues tyrosine 83, 153-156 (RHMR), aspartate 161, and 177-180 (SLEW). The Tyrosine-protein phosphatase domain maps to 92–249 (NYTLIRDELI…TYDLAKNDPW (158 aa)). Cysteine 193 acts as the Phosphocysteine intermediate in catalysis. Positions 193–199 (CSAGLGR) match the Glucan phosphatase signature motif CXAGXGR motif. Residues 194–199 (SAGLGR), glycine 230, lysine 245, glutamate 251, 259–263 (NAFED), and glutamate 268 contribute to the substrate site.

As to expression, widely expressed.

The protein localises to the plastid. It localises to the chloroplast. In terms of biological role, starch-associated phosphoglucan phosphatase that selectively dephosphorylates the glucan C3 position. Probably participates in the regulation of starch degradation. This Arabidopsis thaliana (Mouse-ear cress) protein is Phosphoglucan phosphatase LSF2, chloroplastic (LSF2).